A 779-amino-acid polypeptide reads, in one-letter code: Phosphoribosylformylglycinamidine synthase subunit PurL (779 aa).

His52 is a catalytic residue. ATP-binding residues include Tyr55 and Lys94. Glu96 is a Mg(2+) binding site. Residues 97 to 100 and Arg119 each bind substrate; that span reads SHNH. The active-site Proton acceptor is the His98. A Mg(2+)-binding site is contributed by Asp120. Gln243 is a substrate binding site. Asp271 contributes to the Mg(2+) binding site. Substrate is bound at residue 315 to 317; sequence ESQ. ATP is bound by residues Asn523 and Gly560. Asn561 is a binding site for Mg(2+). Residue Ser563 participates in substrate binding.

The protein belongs to the FGAMS family. As to quaternary structure, monomer. Part of the FGAM synthase complex composed of 1 PurL, 1 PurQ and 2 PurS subunits.

It is found in the cytoplasm. The catalysed reaction is N(2)-formyl-N(1)-(5-phospho-beta-D-ribosyl)glycinamide + L-glutamine + ATP + H2O = 2-formamido-N(1)-(5-O-phospho-beta-D-ribosyl)acetamidine + L-glutamate + ADP + phosphate + H(+). The protein operates within purine metabolism; IMP biosynthesis via de novo pathway; 5-amino-1-(5-phospho-D-ribosyl)imidazole from N(2)-formyl-N(1)-(5-phospho-D-ribosyl)glycinamide: step 1/2. In terms of biological role, part of the phosphoribosylformylglycinamidine synthase complex involved in the purines biosynthetic pathway. Catalyzes the ATP-dependent conversion of formylglycinamide ribonucleotide (FGAR) and glutamine to yield formylglycinamidine ribonucleotide (FGAM) and glutamate. The FGAM synthase complex is composed of three subunits. PurQ produces an ammonia molecule by converting glutamine to glutamate. PurL transfers the ammonia molecule to FGAR to form FGAM in an ATP-dependent manner. PurS interacts with PurQ and PurL and is thought to assist in the transfer of the ammonia molecule from PurQ to PurL. The chain is Phosphoribosylformylglycinamidine synthase subunit PurL from Prochlorococcus marinus (strain MIT 9312).